Reading from the N-terminus, the 429-residue chain is L-threonine dehydratase biosynthetic IlvA (429 aa).

Lys66 is modified (N6-(pyridoxal phosphate)lysine). Pyridoxal 5'-phosphate contacts are provided by residues Asn93, Gly196–Cys200, and Ser322. An ACT-like domain is found at His346–Pro420.

It belongs to the serine/threonine dehydratase family. As to quaternary structure, homotetramer. It depends on pyridoxal 5'-phosphate as a cofactor.

The enzyme catalyses L-threonine = 2-oxobutanoate + NH4(+). It functions in the pathway amino-acid biosynthesis; L-isoleucine biosynthesis; 2-oxobutanoate from L-threonine: step 1/1. Functionally, catalyzes the anaerobic formation of alpha-ketobutyrate and ammonia from threonine in a two-step reaction. The first step involved a dehydration of threonine and a production of enamine intermediates (aminocrotonate), which tautomerizes to its imine form (iminobutyrate). Both intermediates are unstable and short-lived. The second step is the nonenzymatic hydrolysis of the enamine/imine intermediates to form 2-ketobutyrate and free ammonia. In the low water environment of the cell, the second step is accelerated by RidA. In Mycobacterium bovis (strain ATCC BAA-935 / AF2122/97), this protein is L-threonine dehydratase biosynthetic IlvA (ilvA).